Consider the following 188-residue polypeptide: Elongation factor P (188 aa).

Lysine 34 carries the N6-(3,6-diaminohexanoyl)-5-hydroxylysine modification.

It belongs to the elongation factor P family. May be beta-lysylated on the epsilon-amino group of Lys-34 by the combined action of EpmA and EpmB, and then hydroxylated on the C5 position of the same residue by EpmC (if this protein is present). Lysylation is critical for the stimulatory effect of EF-P on peptide-bond formation. The lysylation moiety may extend toward the peptidyltransferase center and stabilize the terminal 3-CCA end of the tRNA. Hydroxylation of the C5 position on Lys-34 may allow additional potential stabilizing hydrogen-bond interactions with the P-tRNA.

It localises to the cytoplasm. Its pathway is protein biosynthesis; polypeptide chain elongation. Involved in peptide bond synthesis. Alleviates ribosome stalling that occurs when 3 or more consecutive Pro residues or the sequence PPG is present in a protein, possibly by augmenting the peptidyl transferase activity of the ribosome. Modification of Lys-34 is required for alleviation. This Serratia proteamaculans (strain 568) protein is Elongation factor P.